The primary structure comprises 898 residues: Conserved oligomeric Golgi complex subunit 5 (898 aa).

A disordered region spans residues 1-30; the sequence is MNNNNNNNEGVSSSSSSSSSPLPNISSPNL. Positions 129–192 form a coiled coil; it reads DTLKLGVSNL…VKKLKNHLQA (64 aa). Disordered stretches follow at residues 311-339, 519-551, and 679-705; these read NNNN…NNNN, SNNS…SSTT, and STGG…SKPT. Positions 679–702 are enriched in low complexity; the sequence is STGGVNNNSNSNNNNEIITINENS.

Its subcellular location is the golgi apparatus membrane. The protein is Conserved oligomeric Golgi complex subunit 5 (cog5) of Dictyostelium discoideum (Social amoeba).